A 314-amino-acid chain; its full sequence is NADH-ubiquinone oxidoreductase chain 2 (314 aa).

Transmembrane regions (helical) follow at residues 13 to 35 (LGVM…VWLG), 61 to 80 (YFVV…VSLM), 85 to 107 (VSGL…LHSW), 117 to 139 (WLAS…SMIL), 144 to 166 (LWVV…NSVR), 189 to 209 (VVFV…FYGC), 224 to 244 (AASG…GFLA), 246 to 266 (VLVF…GSVI), and 294 to 314 (IWSL…VSFI).

This sequence belongs to the complex I subunit 2 family.

Its subcellular location is the mitochondrion inner membrane. It carries out the reaction a ubiquinone + NADH + 5 H(+)(in) = a ubiquinol + NAD(+) + 4 H(+)(out). Its function is as follows. Core subunit of the mitochondrial membrane respiratory chain NADH dehydrogenase (Complex I) that is believed to belong to the minimal assembly required for catalysis. Complex I functions in the transfer of electrons from NADH to the respiratory chain. The immediate electron acceptor for the enzyme is believed to be ubiquinone. The chain is NADH-ubiquinone oxidoreductase chain 2 (ND2) from Mytilus edulis (Blue mussel).